Reading from the N-terminus, the 104-residue chain is MTEWNGEYISPYAEHGKKNEQVKKITVSIPLKVLKVLTDERTRRQVNNLRHATNSELLCEAFLHAYTGQPLPDDADLSKECPDSIPAEAKRLMDEMGIEWEDME.

It belongs to the MetJ family. Homodimer.

It is found in the cytoplasm. This regulatory protein, when combined with SAM (S-adenosylmethionine) represses the expression of the methionine regulon and of enzymes involved in SAM synthesis. This chain is Met repressor, found in Shewanella oneidensis (strain ATCC 700550 / JCM 31522 / CIP 106686 / LMG 19005 / NCIMB 14063 / MR-1).